Here is a 141-residue protein sequence, read N- to C-terminus: Cytochrome c-type biogenesis protein CcmE (141 aa).

Residues 1–7 (MQRKHKR) lie on the Cytoplasmic side of the membrane. The helical; Signal-anchor for type II membrane protein transmembrane segment at 8 to 28 (ILFVAVSFIALGCVSAFVLFE) threads the bilayer. Topologically, residues 29-141 (LSKSISFFCT…SSDAAVIGSS (113 aa)) are periplasmic. 2 residues coordinate heme: His-121 and Tyr-125.

It belongs to the CcmE/CycJ family.

The protein resides in the cell inner membrane. In terms of biological role, heme chaperone required for the biogenesis of c-type cytochromes. Transiently binds heme delivered by CcmC and transfers the heme to apo-cytochromes in a process facilitated by CcmF and CcmH. The chain is Cytochrome c-type biogenesis protein CcmE from Anaplasma phagocytophilum (strain HZ).